The primary structure comprises 293 residues: Homoserine kinase (293 aa).

Position 83–93 (83–93 (PITRGMGSSSA)) interacts with ATP.

The protein belongs to the GHMP kinase family. Homoserine kinase subfamily.

It is found in the cytoplasm. It catalyses the reaction L-homoserine + ATP = O-phospho-L-homoserine + ADP + H(+). It functions in the pathway amino-acid biosynthesis; L-threonine biosynthesis; L-threonine from L-aspartate: step 4/5. Its function is as follows. Catalyzes the ATP-dependent phosphorylation of L-homoserine to L-homoserine phosphate. In Helicobacter pylori (strain J99 / ATCC 700824) (Campylobacter pylori J99), this protein is Homoserine kinase.